The chain runs to 368 residues: BTB/POZ and TAZ domain-containing protein 5 (368 aa).

The interval 1–25 is disordered; the sequence is MENMDDFSPENVLAPPPPPPPMKKS. Residues 55 to 123 form the BTB domain; sequence ADVLIHTDDN…LYSSCYEKQD (69 aa). The TAZ-type zinc-finger motif lies at 233 to 324; that stretch reads QTYTQLYEAM…SEQCKVPLCS (92 aa). The tract at residues 335–358 is caM-binding; it reads RKDEKRWKLLVRNVLSTKRIGGSP.

In terms of assembly, interacts with CUL3A. In terms of tissue distribution, preferentially expressed in young leaves, roots and stems.

It localises to the cytoplasm. Its pathway is protein modification; protein ubiquitination. Its function is as follows. May act as a substrate-specific adapter of an E3 ubiquitin-protein ligase complex (CUL3-RBX1-BTB) which mediates the ubiquitination and subsequent proteasomal degradation of target proteins. This chain is BTB/POZ and TAZ domain-containing protein 5 (BT5), found in Arabidopsis thaliana (Mouse-ear cress).